Here is a 485-residue protein sequence, read N- to C-terminus: U4/U6 small nuclear ribonucleoprotein Prp31 homolog (485 aa).

2 disordered regions span residues 1-36 and 329-361; these read MATLEDSFLADLDELSDNEAELDENDGDVGKEEEDV and IEKWQEPPPARQPKPLPVPDSEPKKRRGGRRLR. Residues 11-36 are compositionally biased toward acidic residues; the sequence is DLDELSDNEAELDENDGDVGKEEEDV. In terms of domain architecture, Nop spans 216–334; that stretch reads IAPNLSAIVG…IRKKIEKWQE (119 aa). Over residues 334–348 the composition is skewed to pro residues; it reads EPPPARQPKPLPVPD. Over residues 352–361 the composition is skewed to basic residues; the sequence is KKRRGGRRLR. Positions 352-365 match the Nuclear localization signal motif; sequence KKRRGGRRLRKMKE.

This sequence belongs to the PRP31 family. In terms of assembly, component of the U4/U6-U5 tri-snRNP complex composed of the U4, U6 and U5 snRNAs and pre-mRNA-splicing factors. Interacts with STA1 and SOP1.

It localises to the nucleus. It is found in the cajal body. Involved in pre-mRNA splicing. Required for the assembly of the U4/U5/U6 tri-snRNP complex, one of the building blocks of the spliceosome. Functions in association with STA1 and ZOP1 in spliceosome dynamics and pre-mRNA splicing. Required for transcriptional regulation and pre-mRNA splicing of cold-responsive genes, such as LTI78/RD29A, KIN2/COR6.6 or COR15A, especially under cold stress. May play a role in stress response. Involved in transcriptional gene silencing of endogenous transposable elements, independently of the RNA-directed DNA methylation (RdDM) pathway. Seems not to participate in the small RNA biogenesis of the RdDM pathway. The sequence is that of U4/U6 small nuclear ribonucleoprotein Prp31 homolog from Arabidopsis thaliana (Mouse-ear cress).